Consider the following 379-residue polypeptide: MDAFKQQLEQLSAQNQYRSIPDLVHQGRYIMRENRKMLNMSSNDYLGLASNENLRQSFLQQYGGNFPSFTSSSSRLLTGNFPIYTDLEELVAQRFQRESALLFNSGYHANIGILPALTTKSLILADKLVHASMIDGIRLSQCEFFRYRHNDYEHLKNLLEKNVGKFDRTFIVTESVFSMDGDVADLKQLVQLKKQFPNTYLYVDEAHAIGVYGKNGLGIAERANVIADIDLLVGTFGKALASMGAYVVCDQILKECLINQMRPLIFSTALPPFNVAWTYFIFERLPQFSKERSHLERLSAFLRQEVEHRTQIMPSQTCIVPYILGENEATLAKAKDLQEQGYYCLPIRPPTVPKGTSRIRLSLTADMTMDEVKQFVACL.

Position 18 (Arg-18) interacts with substrate. 106-107 (GY) contributes to the pyridoxal 5'-phosphate binding site. A substrate-binding site is contributed by His-130. Residues Ser-178, 204–207 (DEAH), and 235–238 (TFGK) each bind pyridoxal 5'-phosphate. Lys-238 carries the N6-(pyridoxal phosphate)lysine modification. Residue Thr-351 participates in substrate binding.

This sequence belongs to the class-II pyridoxal-phosphate-dependent aminotransferase family. BioF subfamily. As to quaternary structure, homodimer. The cofactor is pyridoxal 5'-phosphate.

The catalysed reaction is 6-carboxyhexanoyl-[ACP] + L-alanine + H(+) = (8S)-8-amino-7-oxononanoate + holo-[ACP] + CO2. It participates in cofactor biosynthesis; biotin biosynthesis. Catalyzes the decarboxylative condensation of pimeloyl-[acyl-carrier protein] and L-alanine to produce 8-amino-7-oxononanoate (AON), [acyl-carrier protein], and carbon dioxide. The polypeptide is Putative 8-amino-7-oxononanoate synthase (bioF) (Haemophilus influenzae (strain 86-028NP)).